The chain runs to 464 residues: MLYSKENKESYLEPVFGSSAEDRDIPKYTLGKEPLEPRIAYRLVKDELLDEGSARQNLATFCQTYMEDEATKLMSETLEKNAIDKSEYPRTAELENRCVNIIADLWHAPKDQKFMGTSTIGSSEACMLGGMAMKFAWRKRAEKLGLDIYAKKPNLVISSGYQVCWEKFCVYWDIDMRVVPMDKEHMQLNTDQVLDYVDEYTIGVVGILGITYTGRYDDIYALNEKLEEYNSKTDYKVYIHVDAASGGFFTPFVEPDIIWDFRLKNVISINTSGHKYGLVYPGIGWVLWKDESYLPEELIFKVSYLGGEMPTMQINFSRSASHIIGQYYNFLRYGFEGYRTIHQKTSDVAQYLAHAVEQTGYFDIFNDGSHLPIVCYKLKDDANVNWTLYDLADRLQMRGWQVPAYPLPKSLENIIIQRYVCRADLGFNMAEEFIQDFQASIQELNNAHILFHDTQQSGVHGFTH.

Lys-275 carries the N6-(pyridoxal phosphate)lysine modification.

This sequence belongs to the group II decarboxylase family. Requires pyridoxal 5'-phosphate as cofactor.

It catalyses the reaction L-glutamate + H(+) = 4-aminobutanoate + CO2. Converts internalized glutamate to GABA and increases the internal pH. Involved in glutamate-dependent acid resistance in gastric fluid. The protein is Glutamate decarboxylase beta (gadB) of Listeria monocytogenes serovar 1/2a (strain ATCC BAA-679 / EGD-e).